Reading from the N-terminus, the 817-residue chain is Lon protease (817 aa).

The Lon N-terminal domain occupies 22 to 216 (VPIMPLSDGV…KVTRQLNHQL (195 aa)). 368-375 (GPPGTGKT) serves as a coordination point for ATP. A Lon proteolytic domain is found at 604 to 785 (ALTPGVVMGL…GDVLELALNG (182 aa)). Catalysis depends on residues Ser691 and Lys734. A disordered region spans residues 784–817 (NGNGATKKKKKTPAKSKKSTKPAAKKTAARKSRK). Residues 789–817 (TKKKKKTPAKSKKSTKPAAKKTAARKSRK) show a composition bias toward basic residues.

This sequence belongs to the peptidase S16 family. Homohexamer. Organized in a ring with a central cavity.

It localises to the cytoplasm. It catalyses the reaction Hydrolysis of proteins in presence of ATP.. Functionally, ATP-dependent serine protease that mediates the selective degradation of mutant and abnormal proteins as well as certain short-lived regulatory proteins. Required for cellular homeostasis and for survival from DNA damage and developmental changes induced by stress. Degrades polypeptides processively to yield small peptide fragments that are 5 to 10 amino acids long. Binds to DNA in a double-stranded, site-specific manner. This Desulfosudis oleivorans (strain DSM 6200 / JCM 39069 / Hxd3) (Desulfococcus oleovorans) protein is Lon protease.